The primary structure comprises 481 residues: 2-succinylbenzoate--CoA ligase (481 aa).

It belongs to the ATP-dependent AMP-binding enzyme family. MenE subfamily.

It carries out the reaction 2-succinylbenzoate + ATP + CoA = 2-succinylbenzoyl-CoA + AMP + diphosphate. Its pathway is quinol/quinone metabolism; 1,4-dihydroxy-2-naphthoate biosynthesis; 1,4-dihydroxy-2-naphthoate from chorismate: step 5/7. The protein operates within quinol/quinone metabolism; menaquinone biosynthesis. Functionally, converts 2-succinylbenzoate (OSB) to 2-succinylbenzoyl-CoA (OSB-CoA). This Bacillus cytotoxicus (strain DSM 22905 / CIP 110041 / 391-98 / NVH 391-98) protein is 2-succinylbenzoate--CoA ligase.